The primary structure comprises 1461 residues: Regulation of nuclear pre-mRNA domain-containing protein 2 (1461 aa).

Residue Ala-2 is modified to N-acetylalanine. The residue at position 16 (Ser-16) is a Phosphoserine. A CID domain is found at 19–149 (SAGALESSLD…ALREALSTTF (131 aa)). 2 disordered regions span residues 311–438 (STLP…TSLS) and 469–504 (NTGV…TTSH). The span at 352-368 (ESEKSATPEPVTDNRDV) shows a compositional bias: basic and acidic residues. Ser-356 is subject to Phosphoserine. Position 358 is a phosphothreonine (Thr-358). A compositionally biased stretch (acidic residues) spans 369-378 (EDMELSDVED). Residue Ser-374 is modified to Phosphoserine. The segment covering 379-394 (DGSKIIVEDRKEKPAE) has biased composition (basic and acidic residues). The segment covering 397-416 (AVSTSVPTKPTENISKASSC) has biased composition (polar residues). 2 stretches are compositionally biased toward low complexity: residues 417 to 426 (TPVPVTMTAT) and 473 to 491 (SPAS…NLTS). Phosphoserine is present on residues Ser-473, Ser-476, and Ser-479. Residue Thr-482 is modified to Phosphothreonine. Ser-485 bears the Phosphoserine mark. Phosphothreonine is present on Thr-517. Residues 547–623 (TGNPVPASEA…SPGLPSTTFK (77 aa)) form a disordered region. Low complexity predominate over residues 553 to 566 (ASEAASQSTSASPA). Residue Ser-564 is modified to Phosphoserine. Polar residues predominate over residues 567 to 583 (NTTVSTIKGRNLPSSAQ). Residue Ser-593 is modified to Phosphoserine. Residues 593–614 (SPNSSTSEVSSTSASKASIGQS) show a composition bias toward low complexity. Thr-598 carries the post-translational modification Phosphothreonine. A phosphoserine mark is found at Ser-614, Ser-663, Ser-665, and Ser-716. 5 disordered regions span residues 696–849 (GSSA…MMNL), 900–997 (SENC…EKVL), 1016–1102 (ASRK…SGEP), 1132–1312 (STSG…APPL), and 1340–1461 (FGVL…PPRY). The residue at position 723 (Thr-723) is a Phosphothreonine. Ser-730 is subject to Phosphoserine. Phosphothreonine is present on Thr-732. Polar residues predominate over residues 742–752 (PTSSSVDTMSL). Residues Ser-758 and Ser-762 each carry the phosphoserine modification. The span at 758 to 768 (SPGSSTPSSTR) shows a compositional bias: low complexity. Phosphothreonine is present on Thr-763. 8 positions are modified to phosphoserine: Ser-769, Ser-817, Ser-826, Ser-900, Ser-909, Ser-928, Ser-965, and Ser-976. The span at 927-954 (RSPSPSKNDSFFTPDSNHNSLSQSTTGH) shows a compositional bias: polar residues. The span at 1031–1055 (SKGTPSDGVSLSNLTQPSLTATDQQ) shows a compositional bias: polar residues. Ser-1068 and Ser-1099 each carry phosphoserine. The segment covering 1141 to 1150 (GPSSASELAS) has biased composition (low complexity). The segment covering 1151–1160 (LGGGGSGGLT) has biased composition (gly residues). Residues 1174–1189 (FQESVGSFRSNSFNST) show a composition bias toward polar residues. 2 stretches are compositionally biased toward pro residues: residues 1267-1277 (FPTPPPPPPPG) and 1290-1299 (STPPPPPPPV). Arg-1366 carries the post-translational modification Asymmetric dimethylarginine. Residues 1382-1391 (PHGGGGGGGS) are compositionally biased toward gly residues. Residues 1417–1434 (PRPDFRPREPFLSRDPFH) show a composition bias toward basic and acidic residues. Asymmetric dimethylarginine is present on residues Arg-1424 and Arg-1430.

In terms of assembly, associates with the RNA polymerase II complex.

The protein is Regulation of nuclear pre-mRNA domain-containing protein 2 (RPRD2) of Homo sapiens (Human).